The sequence spans 250 residues: Petrobactin import ATP-binding protein FatE (250 aa).

Positions 2–236 (IKIDNVKKFY…TLLTDIFETR (235 aa)) constitute an ABC transporter domain. 34 to 41 (GPNGAGKS) serves as a coordination point for ATP.

Belongs to the ABC transporter superfamily. In terms of assembly, the complex is composed of two ATP-binding proteins (FatE), two transmembrane proteins (FatC and FatD) and a solute-binding protein (FpuA).

It localises to the cell membrane. It catalyses the reaction a Fe(III)-siderophore(out) + ATP + H2O = a Fe(III)-siderophore(in) + ADP + phosphate + H(+). Part of an ABC transporter complex involved in ferric-petrobactin uptake. Probably responsible for energy coupling to the transport system. The polypeptide is Petrobactin import ATP-binding protein FatE (Bacillus anthracis).